Consider the following 80-residue polypeptide: Acyl carrier protein (80 aa).

The 76-residue stretch at 1 to 76 (MTLEEKIIEI…DVIDYLKVRN (76 aa)) folds into the Carrier domain. Position 36 is an O-(pantetheine 4'-phosphoryl)serine (S36).

It belongs to the acyl carrier protein (ACP) family. 4'-phosphopantetheine is transferred from CoA to a specific serine of apo-ACP by AcpS. This modification is essential for activity because fatty acids are bound in thioester linkage to the sulfhydryl of the prosthetic group.

Its subcellular location is the cytoplasm. It participates in lipid metabolism; fatty acid biosynthesis. Functionally, carrier of the growing fatty acid chain in fatty acid biosynthesis. This Syntrophus aciditrophicus (strain SB) protein is Acyl carrier protein.